Here is a 189-residue protein sequence, read N- to C-terminus: Proline-rich protein 29 (189 aa).

The tract at residues 152–189 is disordered; the sequence is SREREVRAVPPPPPPSATGTVGADVPPASDYYDAESLL.

The chain is Proline-rich protein 29 (PRR29) from Homo sapiens (Human).